The chain runs to 590 residues: CTP synthase (590 aa).

Residues 1–278 form an amidoligase domain region; the sequence is MRKHPQSATK…DAFVVRRLNL (278 aa). Serine 20 provides a ligand contact to CTP. Serine 20 contacts UTP. Residues 21–26 and aspartate 78 contribute to the ATP site; that span reads SLGKGL. Mg(2+)-binding residues include aspartate 78 and glutamate 152. Residues 159-161, 199-204, and lysine 235 each bind CTP; these read DIE and KTKPTQ. Residues 199–204 and lysine 235 each bind UTP; that span reads KTKPTQ. Residues 303–551 enclose the Glutamine amidotransferase type-1 domain; that stretch reads RIALVGKYVD…VGAAIDYKSA (249 aa). Glycine 366 provides a ligand contact to L-glutamine. Residue cysteine 393 is the Nucleophile; for glutamine hydrolysis of the active site. L-glutamine contacts are provided by residues 394–397, glutamate 416, and arginine 477; that span reads LGLQ. Residues histidine 524 and glutamate 526 contribute to the active site. A disordered region spans residues 566-590; it reads EHLPNSSNQHRDGVERSFPAPAARG.

It belongs to the CTP synthase family. In terms of assembly, homotetramer.

The enzyme catalyses UTP + L-glutamine + ATP + H2O = CTP + L-glutamate + ADP + phosphate + 2 H(+). It carries out the reaction L-glutamine + H2O = L-glutamate + NH4(+). It catalyses the reaction UTP + NH4(+) + ATP = CTP + ADP + phosphate + 2 H(+). Its pathway is pyrimidine metabolism; CTP biosynthesis via de novo pathway; CTP from UDP: step 2/2. With respect to regulation, allosterically activated by GTP, when glutamine is the substrate; GTP has no effect on the reaction when ammonia is the substrate. The allosteric effector GTP functions by stabilizing the protein conformation that binds the tetrahedral intermediate(s) formed during glutamine hydrolysis. Inhibited by the product CTP, via allosteric rather than competitive inhibition. In terms of biological role, catalyzes the ATP-dependent amination of UTP to CTP with either L-glutamine or ammonia as the source of nitrogen. Regulates intracellular CTP levels through interactions with the four ribonucleotide triphosphates. This chain is CTP synthase, found in Mycobacterium leprae (strain Br4923).